The sequence spans 112 residues: uncharacterized protein (112 aa).

Transmembrane regions (helical) follow at residues 55–75 and 91–111; these read LLEI…PTLF and LIML…LLLL.

The protein localises to the membrane. This is an uncharacterized protein from Saccharomyces cerevisiae (strain ATCC 204508 / S288c) (Baker's yeast).